An 809-amino-acid chain; its full sequence is Glycerol-3-phosphate acyltransferase (809 aa).

The HXXXXD motif signature appears at 306–311 (HRSHMD).

It belongs to the GPAT/DAPAT family.

It localises to the cell inner membrane. The catalysed reaction is sn-glycerol 3-phosphate + an acyl-CoA = a 1-acyl-sn-glycero-3-phosphate + CoA. Its pathway is phospholipid metabolism; CDP-diacylglycerol biosynthesis; CDP-diacylglycerol from sn-glycerol 3-phosphate: step 1/3. The chain is Glycerol-3-phosphate acyltransferase from Vibrio vulnificus (strain CMCP6).